Consider the following 356-residue polypeptide: tRNA N6-adenosine threonylcarbamoyltransferase (356 aa).

2 residues coordinate Fe cation: His-115 and His-119. Substrate is bound by residues 137 to 141 (LVSGG), Asp-170, Gly-183, and Asn-280. Asp-308 contacts Fe cation.

It belongs to the KAE1 / TsaD family. Fe(2+) serves as cofactor.

The protein localises to the cytoplasm. It catalyses the reaction L-threonylcarbamoyladenylate + adenosine(37) in tRNA = N(6)-L-threonylcarbamoyladenosine(37) in tRNA + AMP + H(+). Functionally, required for the formation of a threonylcarbamoyl group on adenosine at position 37 (t(6)A37) in tRNAs that read codons beginning with adenine. Is involved in the transfer of the threonylcarbamoyl moiety of threonylcarbamoyl-AMP (TC-AMP) to the N6 group of A37, together with TsaE and TsaB. TsaD likely plays a direct catalytic role in this reaction. The protein is tRNA N6-adenosine threonylcarbamoyltransferase of Paracoccus denitrificans (strain Pd 1222).